We begin with the raw amino-acid sequence, 138 residues long: Large-conductance mechanosensitive channel (138 aa).

2 helical membrane-spanning segments follow: residues 10-30 and 76-96; these read FAMR…AAFG and GSFI…FLAI.

It belongs to the MscL family. As to quaternary structure, homopentamer.

The protein localises to the cell inner membrane. In terms of biological role, channel that opens in response to stretch forces in the membrane lipid bilayer. May participate in the regulation of osmotic pressure changes within the cell. This Serratia proteamaculans (strain 568) protein is Large-conductance mechanosensitive channel.